We begin with the raw amino-acid sequence, 252 residues long: Imidazole glycerol phosphate synthase subunit HisF (252 aa).

Active-site residues include aspartate 11 and aspartate 130.

It belongs to the HisA/HisF family. As to quaternary structure, heterodimer of HisH and HisF.

It localises to the cytoplasm. The catalysed reaction is 5-[(5-phospho-1-deoxy-D-ribulos-1-ylimino)methylamino]-1-(5-phospho-beta-D-ribosyl)imidazole-4-carboxamide + L-glutamine = D-erythro-1-(imidazol-4-yl)glycerol 3-phosphate + 5-amino-1-(5-phospho-beta-D-ribosyl)imidazole-4-carboxamide + L-glutamate + H(+). It participates in amino-acid biosynthesis; L-histidine biosynthesis; L-histidine from 5-phospho-alpha-D-ribose 1-diphosphate: step 5/9. Functionally, IGPS catalyzes the conversion of PRFAR and glutamine to IGP, AICAR and glutamate. The HisF subunit catalyzes the cyclization activity that produces IGP and AICAR from PRFAR using the ammonia provided by the HisH subunit. The sequence is that of Imidazole glycerol phosphate synthase subunit HisF from Bacillus cereus (strain AH820).